A 532-amino-acid polypeptide reads, in one-letter code: 56 kDa type-specific antigen (532 aa).

Positions 1-22 (MKKIMLIASAMSALSLPFSASA) are cleaved as a signal peptide. Residues 67–87 (LTTGLPFGGTLAAGMTIAPGF) form a helical membrane-spanning segment. 2 disordered regions span residues 113 to 140 (KGEIKADSGGGTDAPIRKPFKLTPPQPT) and 400 to 426 (QQEEDAKNQGKGDCKQQQGASEKSKEG). The segment covering 403–413 (EDAKNQGKGDC) has biased composition (basic and acidic residues). Residues 480–500 (TGMVASGALGVAINAAEGVCV) form a helical membrane-spanning segment.

The protein resides in the cell membrane. May be an adherent factor for rickettsial adsorption to the host-cell surface and a determinant of virulence of individual rickettsial strain. It is the major outer membrane protein. The polypeptide is 56 kDa type-specific antigen (Orientia tsutsugamushi (Rickettsia tsutsugamushi)).